Reading from the N-terminus, the 314-residue chain is Lipoyl synthase (314 aa).

[4Fe-4S] cluster contacts are provided by cysteine 40, cysteine 45, cysteine 51, cysteine 67, cysteine 71, cysteine 74, and serine 280. The Radical SAM core domain occupies 53-269; sequence SERKTATFMI…KNIALEKGFS (217 aa).

This sequence belongs to the radical SAM superfamily. Lipoyl synthase family. [4Fe-4S] cluster is required as a cofactor.

The protein localises to the cytoplasm. It catalyses the reaction [[Fe-S] cluster scaffold protein carrying a second [4Fe-4S](2+) cluster] + N(6)-octanoyl-L-lysyl-[protein] + 2 oxidized [2Fe-2S]-[ferredoxin] + 2 S-adenosyl-L-methionine + 4 H(+) = [[Fe-S] cluster scaffold protein] + N(6)-[(R)-dihydrolipoyl]-L-lysyl-[protein] + 4 Fe(3+) + 2 hydrogen sulfide + 2 5'-deoxyadenosine + 2 L-methionine + 2 reduced [2Fe-2S]-[ferredoxin]. It participates in protein modification; protein lipoylation via endogenous pathway; protein N(6)-(lipoyl)lysine from octanoyl-[acyl-carrier-protein]. Its function is as follows. Catalyzes the radical-mediated insertion of two sulfur atoms into the C-6 and C-8 positions of the octanoyl moiety bound to the lipoyl domains of lipoate-dependent enzymes, thereby converting the octanoylated domains into lipoylated derivatives. This chain is Lipoyl synthase, found in Oceanobacillus iheyensis (strain DSM 14371 / CIP 107618 / JCM 11309 / KCTC 3954 / HTE831).